The sequence spans 306 residues: Lymphotoxin-beta (306 aa).

At 1-27 (MGTRGLQGLGGRPQGRGCLLLAVAGAT) the chain is on the cytoplasmic side. The chain crosses the membrane as a helical; Signal-anchor for type II membrane protein span at residues 28-48 (SLVTLLLAVPITVLAVLALVP). At 49–306 (QDQGRRVEKI…KTFFGAVMVG (258 aa)) the chain is on the extracellular side. Disordered stretches follow at residues 63-112 (AQAQ…GPVA) and 127-151 (PAAD…DLNP). Positions 74–85 (PSCILPSPSSLS) are enriched in low complexity. Positions 95–112 (QRSNASRNLASTSQGPVA) are enriched in polar residues. Asn-98 is a glycosylation site (N-linked (GlcNAc...) asparagine). One can recognise a THD domain in the interval 154 to 305 (PAAHLIGAWM…GKTFFGAVMV (152 aa)). N-linked (GlcNAc...) asparagine glycosylation is present at Asn-284.

The protein belongs to the tumor necrosis factor family. As to quaternary structure, heterotrimer of either two LTB and one LTA subunits or (less prevalent) two LTA and one LTB subunits.

The protein localises to the membrane. In terms of biological role, cytokine that binds to LTBR/TNFRSF3. May play a specific role in immune response regulation. Provides the membrane anchor for the attachment of the heterotrimeric complex to the cell surface. This chain is Lymphotoxin-beta (Ltb), found in Mus musculus (Mouse).